Consider the following 39-residue polypeptide: Adipokinetic prohormone type 2 (39 aa).

Residue Q1 is modified to Pyrrolidone carboxylic acid. W8 is modified (tryptophan amide).

The protein belongs to the AKH/HRTH/RPCH family. Adipokinetic hormone precursor-related peptide (APRP) can form three type of disulfide-bond dimers: p1 (alpha-alpha), p2 (alpha-beta), and p3 (beta-beta).

The protein localises to the secreted. This hormone, released from cells in the corpora cardiaca, causes release of diglycerides from the fat body and stimulation of muscles to use these diglycerides as an energy source during energy-demanding processes. This chain is Adipokinetic prohormone type 2, found in Schistocerca gregaria (Desert locust).